A 66-amino-acid chain; its full sequence is Phylloseptin-B1 (66 aa).

A signal peptide spans 1–22 (MAFLKKSLFLVLFLGLVSLSIC). A propeptide spanning residues 23 to 46 (EEEKRETEEKEYDQGEDDKSEEKR) is cleaved from the precursor. Leu-65 carries the leucine amide modification.

Belongs to the frog skin active peptide (FSAP) family. Phylloseptin subfamily. Expressed by the skin glands.

The protein resides in the secreted. It localises to the target cell membrane. Antimicrobial peptide with activity against only a few strains of Gram-positive bacteria (S.aureus and B.megaterium). Acts in a synergistic effect in combination with Plasticin-B1 at doses that are not active alone. This Phyllomedusa bicolor (Two-colored leaf frog) protein is Phylloseptin-B1.